The chain runs to 901 residues: MSHEWLISASETMRSIGNGEGLRDKGAVVANNDGEFNEGDTNREEDSSTIFSFDFDEEIVMCIDFSGGKLGCSILDYHTKTLKAFDQDYVVNKTTISSHDLIDDADMSSNDISLLLGLLIMEANPTVCLVPARLEDWIFDYIKTKCDEINCRLELQPIKRFKKWDLLQSLQLRGHDNQTILNDILSNSKFTTTVTLGTVGCILANHEQLGEYNDSTASSNMVTGRLVQNAFEDVIHGIRYIDIRDRMVLDENTISALHIFPTAHKLGHDKMMRNGFFSVFELFNQVSSDYARRILKSWLINPLTNKKRIETRYSIIRTLLDKQNAIIFSDLSQSIKRCPDAFGFINQLRSGKSTLGTWSKVASFLEKGIAIFQLVSSLKLGSDEANILHDIKNKVDISALKECLRKVETVIDFDTSRDTKTLTINTGVDNRLDECRNIYNHLEGILLDVARETQIFLLNTMPQEDCKTTKSLEKLVNAVYIPQLGYLVTISVLMEPLLDGIPNLQWEEIFRSSENIYFKNGRVLELDETYGDIYGAISDFEIEILFSLQEQILRRKTQLTAYNILLSELEILLSFAQVSAERNYAEPQLVEDECILEIINGRHALYETFLDNYIPNSTMIDGGLFSELSWCEQNKGRIIVVTGANASGKSVYLTQNGLIVYLAQIGCFVPAERARIGIADKILTRIRTQETVYKTQSSFLLDSQQMAKSLSLATEKSLILIDEYGKGTDILDGPSLFGSIMLNMSKSEKCPRIIACTHFHELFNENVLTENIKGIKHYCTDILISQKYNLLETAHVGEDHESEGITFLFKVKEGISKQSFGIYCAKVCGLSRDIVERAEELSRMINRGDDVVQQCGNLTEKEMREFQKNQEIVKKFLSWDLDLETTTTSENLRLKLKNFLR.

643–650 lines the ATP pocket; it reads GANASGKS.

This sequence belongs to the DNA mismatch repair MutS family. In terms of assembly, heterooligomer of MSH4 and MSH5.

In terms of biological role, involved in meiotic recombination. Facilitate crossovers between homologs during meiosis. This is MutS protein homolog 5 (MSH5) from Saccharomyces cerevisiae (strain ATCC 204508 / S288c) (Baker's yeast).